Here is a 247-residue protein sequence, read N- to C-terminus: Synaptonemal complex central element protein 1-like (247 aa).

Residues 71-196 (SEELGEAQAL…LQEARETWDS (126 aa)) adopt a coiled-coil conformation. The segment at 189-247 (EARETWDSPGNCGLKTELEELEGQSQRSPEAQNDKGEASQEEQHHLETSEELPRTGTLC) is disordered. Residues 220–241 (QNDKGEASQEEQHHLETSEELP) are compositionally biased toward basic and acidic residues.

The protein belongs to the SYCE family. In terms of tissue distribution, isoform 1 is abundantly expressed in testis and weakly in ovary, it is not found in other tissues. Isoform 2 is expressed in testis and poorly in brain, heart, lung and other examined tissues.

In terms of biological role, may be involved in meiosis. Isoform 1 may be involved in meiosis during spermatogenesis while isoform 2 is probably related to a later stage of meiosis, in the development stage of secondary spermatocytes and spermatids. The chain is Synaptonemal complex central element protein 1-like (Syce1l) from Mus musculus (Mouse).